A 619-amino-acid polypeptide reads, in one-letter code: 2-isopropylmalate synthase (619 aa).

Residues 61 to 336 form the Pyruvate carboxyltransferase domain; sequence PRWLSTDLRD…SPNLDFSDLT (276 aa). Residues Asp-70, His-275, His-277, and Asn-311 each coordinate a divalent metal cation.

The protein belongs to the alpha-IPM synthase/homocitrate synthase family. LeuA type 2 subfamily. In terms of assembly, homodimer. Requires a divalent metal cation as cofactor.

The protein localises to the cytoplasm. The protein resides in the mitochondrion. It catalyses the reaction 3-methyl-2-oxobutanoate + acetyl-CoA + H2O = (2S)-2-isopropylmalate + CoA + H(+). Its pathway is amino-acid biosynthesis; L-leucine biosynthesis; L-leucine from 3-methyl-2-oxobutanoate: step 1/4. Its function is as follows. Catalyzes the condensation of the acetyl group of acetyl-CoA with 3-methyl-2-oxobutanoate (2-oxoisovalerate) to form 3-carboxy-3-hydroxy-4-methylpentanoate (2-isopropylmalate). This chain is 2-isopropylmalate synthase (LEU4), found in Saccharomyces cerevisiae (strain ATCC 204508 / S288c) (Baker's yeast).